A 35-amino-acid chain; its full sequence is Photosystem II reaction center protein M (35 aa).

The chain crosses the membrane as a helical span at residues 7–27; it reads GFLASLLFVLVPSVFLIVLYI.

This sequence belongs to the PsbM family. PSII is composed of 1 copy each of membrane proteins PsbA, PsbB, PsbC, PsbD, PsbE, PsbF, PsbH, PsbI, PsbJ, PsbK, PsbL, PsbM, PsbT, PsbX, PsbY, PsbZ, Psb30/Ycf12, peripheral proteins PsbO, CyanoQ (PsbQ), PsbU, PsbV and a large number of cofactors. It forms dimeric complexes.

The protein resides in the cellular thylakoid membrane. Functionally, one of the components of the core complex of photosystem II (PSII). PSII is a light-driven water:plastoquinone oxidoreductase that uses light energy to abstract electrons from H(2)O, generating O(2) and a proton gradient subsequently used for ATP formation. It consists of a core antenna complex that captures photons, and an electron transfer chain that converts photonic excitation into a charge separation. This subunit is found at the monomer-monomer interface. The protein is Photosystem II reaction center protein M of Synechococcus elongatus (strain ATCC 33912 / PCC 7942 / FACHB-805) (Anacystis nidulans R2).